Reading from the N-terminus, the 261-residue chain is Potassium/proton antiporter CemA (261 aa).

3 helical membrane passes run 138–158 (IISH…CLIL), 186–206 (ILLV…ELMI), and 221–241 (IISG…KYWI).

The protein belongs to the CemA family.

The protein resides in the plastid. It localises to the chloroplast inner membrane. It catalyses the reaction K(+)(in) + H(+)(out) = K(+)(out) + H(+)(in). Its function is as follows. Contributes to K(+)/H(+) antiport activity by supporting proton efflux to control proton extrusion and homeostasis in chloroplasts in a light-dependent manner to modulate photosynthesis. Prevents excessive induction of non-photochemical quenching (NPQ) under continuous-light conditions. Indirectly promotes efficient inorganic carbon uptake into chloroplasts. The sequence is that of Potassium/proton antiporter CemA from Cryptomeria japonica (Japanese cedar).